Here is a 155-residue protein sequence, read N- to C-terminus: MLDAIQCIEPNFSGKGLKIGIAMARFNTPVCHGLRDACLAELEKLGVAAGDITLATVPGALEVPLVLQTMAKSGRFDALVALGAVIRGETYHFELVSNESGAGVTRVGLDFDIPVANAILTTENDEQAEVRMLEKGGDAARVAVEMANLHKTLRG.

Residues Phe-26, 60–62 (ALE), and 84–86 (AVI) contribute to the 5-amino-6-(D-ribitylamino)uracil site. (2S)-2-hydroxy-3-oxobutyl phosphate is bound at residue 89-90 (ET). The Proton donor role is filled by His-92. Asn-117 provides a ligand contact to 5-amino-6-(D-ribitylamino)uracil. Residue Arg-131 coordinates (2S)-2-hydroxy-3-oxobutyl phosphate.

Belongs to the DMRL synthase family.

It carries out the reaction (2S)-2-hydroxy-3-oxobutyl phosphate + 5-amino-6-(D-ribitylamino)uracil = 6,7-dimethyl-8-(1-D-ribityl)lumazine + phosphate + 2 H2O + H(+). It functions in the pathway cofactor biosynthesis; riboflavin biosynthesis; riboflavin from 2-hydroxy-3-oxobutyl phosphate and 5-amino-6-(D-ribitylamino)uracil: step 1/2. In terms of biological role, catalyzes the formation of 6,7-dimethyl-8-ribityllumazine by condensation of 5-amino-6-(D-ribitylamino)uracil with 3,4-dihydroxy-2-butanone 4-phosphate. This is the penultimate step in the biosynthesis of riboflavin. This chain is 6,7-dimethyl-8-ribityllumazine synthase, found in Chromobacterium violaceum (strain ATCC 12472 / DSM 30191 / JCM 1249 / CCUG 213 / NBRC 12614 / NCIMB 9131 / NCTC 9757 / MK).